The following is a 133-amino-acid chain: DUF35 domain-containing scaffold protein (133 aa).

4 residues coordinate Zn(2+): Cys23, Cys26, Cys37, and Cys40.

It belongs to the scaffold protein DUF35 family. As to quaternary structure, interacts with acetoacetyl-CoA thiolase and HMG-CoA synthase (HMGCS) that catalyzes the first and second step in the mevalonate pathway, respectively.

Its function is as follows. Functions as a scaffold to connect the acetoacetyl-CoA thiolase and HMG-CoA synthase (HMGCS) dimers in the channeling thiolase/HMGCS complex, which allows for efficient coupling of the endergonic thiolase reaction with the exergonic HMGCS reaction. This is DUF35 domain-containing scaffold protein from Methanothermobacter thermautotrophicus (strain ATCC 29096 / DSM 1053 / JCM 10044 / NBRC 100330 / Delta H) (Methanobacterium thermoautotrophicum).